The sequence spans 542 residues: MELRSELPSVPGAATAAAATATGPPVASVASVAAAAAAAASLPVSVAGGLLRGPPLLLRAAEKYPRTPKCARCRNHGVVSALKGHKRYCRWKDCLCAKCTLIAERQRVMAAQVALRRQQAQEENEARELQLLYGTAEGLALAAANGIIPPRPAYEVFGSVCAADGGGPGAGAPAGTGGGAAGAGGSEAKLQKFDLFPKTLLQAGRPGSPLPPPVKPLSPDGADSGPGTSSPEVRPGSGSENGDGESFSGSPLARASKEAGGSCPGSAGPGGGGEEDSPGSASPLGSESGSEADKEEGEAAPAPGLGGGSGPRQRTPLDILTRVFPGHRRGVLELVLQGCGGDVVQAIEQVLNHHRGGLAAGLGPAAPPDKAAVGAAAAADDAWPSRVDAAAAAAAAAGGPGLPAPLQAGPAAPPHHRPLLAGAMAPGALGSLSSRSAFSPLQPNASHFGADAGAYPLGAPLGLSPLRLAYSAAAAHSRGLAFMAPYSTAGLVPTLGFRPPMDYAFSDLMRDRSAAAAAAVHKEPTYGGGLYGPMVNGAPEKQ.

Positions 70-117 (CARCRNHGVVSALKGHKRYCRWKDCLCAKCTLIAERQRVMAAQVALRR) form a DNA-binding region, DM. The interval 201 to 316 (LQAGRPGSPL…GGSGPRQRTP (116 aa)) is disordered. The DMA domain occupies 314 to 349 (RTPLDILTRVFPGHRRGVLELVLQGCGGDVVQAIEQ).

The protein belongs to the DMRT family. In terms of tissue distribution, expressed in testis.

The protein localises to the nucleus. Its function is as follows. May be involved in sexual development. This chain is Doublesex- and mab-3-related transcription factor A2 (DMRTA2), found in Homo sapiens (Human).